The chain runs to 800 residues: Transducin beta-like protein 3 (800 aa).

Alanine 2 carries the post-translational modification N-acetylalanine. WD repeat units follow at residues 64–105, 107–146, 149–190, 193–232, 245–284, 290–329, 332–372, 374–413, 419–459, 477–516, 519–560, 562–602, and 604–642; these read EDQE…RLWK, IHTA…GTHH, GSPG…CLAV, AHYS…ATRT, LPEE…CVHA, GPGR…LRKQ, GYSE…CQIL, GHTD…EVAC, GHTH…LSKG, CHDK…LLGT, GHRR…KTFE, HDAS…RTLD, and HEDK…EQAE. A Phosphoserine modification is found at serine 257. Lysine 407 is covalently cross-linked (Glycyl lysine isopeptide (Lys-Gly) (interchain with G-Cter in SUMO2)).

As to quaternary structure, part of the small subunit (SSU) processome, composed of more than 70 proteins and the RNA chaperone small nucleolar RNA (snoRNA) U3.

Its subcellular location is the nucleus. The protein resides in the nucleolus. Functionally, part of the small subunit (SSU) processome, first precursor of the small eukaryotic ribosomal subunit. During the assembly of the SSU processome in the nucleolus, many ribosome biogenesis factors, an RNA chaperone and ribosomal proteins associate with the nascent pre-rRNA and work in concert to generate RNA folding, modifications, rearrangements and cleavage as well as targeted degradation of pre-ribosomal RNA by the RNA exosome. In Bos taurus (Bovine), this protein is Transducin beta-like protein 3 (TBL3).